The following is a 299-amino-acid chain: Oxygen-dependent coproporphyrinogen-III oxidase (299 aa).

Serine 92 provides a ligand contact to substrate. Histidine 96 and histidine 106 together coordinate a divalent metal cation. The active-site Proton donor is histidine 106. 108-110 (NVR) contributes to the substrate binding site. The a divalent metal cation site is built by histidine 145 and histidine 175. The interval 239 to 274 (YVEFNLVYDRGTLFGLQSGGRAESILMSLPPRVRWE) is important for dimerization. Position 257–259 (257–259 (GGR)) interacts with substrate.

It belongs to the aerobic coproporphyrinogen-III oxidase family. In terms of assembly, homodimer. A divalent metal cation serves as cofactor.

The protein localises to the cytoplasm. The catalysed reaction is coproporphyrinogen III + O2 + 2 H(+) = protoporphyrinogen IX + 2 CO2 + 2 H2O. The protein operates within porphyrin-containing compound metabolism; protoporphyrin-IX biosynthesis; protoporphyrinogen-IX from coproporphyrinogen-III (O2 route): step 1/1. In terms of biological role, involved in the heme biosynthesis. Catalyzes the aerobic oxidative decarboxylation of propionate groups of rings A and B of coproporphyrinogen-III to yield the vinyl groups in protoporphyrinogen-IX. The sequence is that of Oxygen-dependent coproporphyrinogen-III oxidase from Xanthomonas euvesicatoria pv. vesicatoria (strain 85-10) (Xanthomonas campestris pv. vesicatoria).